The chain runs to 692 residues: Methionine--tRNA ligase (692 aa).

Residues 12-22 carry the 'HIGH' region motif; sequence PYANGSFHIGH. Zn(2+) contacts are provided by cysteine 143, cysteine 146, cysteine 156, and cysteine 159. Residues 341–345 carry the 'KMSKS' region motif; the sequence is KMSKS. Residue lysine 344 participates in ATP binding. The tRNA-binding domain maps to 586–692; it reads DFAKIDLRIA…PGAQPGMRVR (107 aa).

The protein belongs to the class-I aminoacyl-tRNA synthetase family. MetG type 1 subfamily. Homodimer. It depends on Zn(2+) as a cofactor.

The protein localises to the cytoplasm. The catalysed reaction is tRNA(Met) + L-methionine + ATP = L-methionyl-tRNA(Met) + AMP + diphosphate. Is required not only for elongation of protein synthesis but also for the initiation of all mRNA translation through initiator tRNA(fMet) aminoacylation. This chain is Methionine--tRNA ligase, found in Bordetella parapertussis (strain 12822 / ATCC BAA-587 / NCTC 13253).